A 323-amino-acid polypeptide reads, in one-letter code: GTP 3',8-cyclase (323 aa).

Residues 4–226 (TFQRQINYLR…LEPFPDLATN (223 aa)) form the Radical SAM core domain. Arg13 provides a ligand contact to GTP. [4Fe-4S] cluster-binding residues include Cys20 and Cys24. Residue Tyr26 participates in S-adenosyl-L-methionine binding. Position 27 (Cys27) interacts with [4Fe-4S] cluster. Residue Arg63 coordinates GTP. Gly67 provides a ligand contact to S-adenosyl-L-methionine. Thr94 contributes to the GTP binding site. Residue Ser118 participates in S-adenosyl-L-methionine binding. A GTP-binding site is contributed by Lys155. Residue Met189 participates in S-adenosyl-L-methionine binding. Positions 252 and 255 each coordinate [4Fe-4S] cluster. GTP is bound at residue 257-259 (RLR). Position 269 (Cys269) interacts with [4Fe-4S] cluster.

This sequence belongs to the radical SAM superfamily. MoaA family. As to quaternary structure, monomer and homodimer. The cofactor is [4Fe-4S] cluster.

It catalyses the reaction GTP + AH2 + S-adenosyl-L-methionine = (8S)-3',8-cyclo-7,8-dihydroguanosine 5'-triphosphate + 5'-deoxyadenosine + L-methionine + A + H(+). It participates in cofactor biosynthesis; molybdopterin biosynthesis. Its function is as follows. Catalyzes the cyclization of GTP to (8S)-3',8-cyclo-7,8-dihydroguanosine 5'-triphosphate. The sequence is that of GTP 3',8-cyclase from Moorella thermoacetica (strain ATCC 39073 / JCM 9320).